The primary structure comprises 427 residues: ATP-sensitive inward rectifier potassium channel 12 (427 aa).

Over 1 to 77 (MTASGRTNPY…LADMFTTCVD (77 aa)) the chain is Cytoplasmic. C75 is subject to S-nitrosocysteine. A helical membrane pass occupies residues 78-104 (IRWRYMLLIFSLAFLASWLLFGVIFWV). A 1,2-diacyl-sn-glycero-3-phospho-(1D-myo-inositol-4,5-bisphosphate) is bound by residues R79 and R81. Residues 105–129 (IAVAHGDLEPAEAHGRTPCVLQVHG) lie on the Extracellular side of the membrane. A disulfide bridge connects residues C123 and C155. Positions 130–146 (FMAAFLFSIETQTTIGY) form an intramembrane region, helical; Pore-forming. The K(+) site is built by T143, I144, G145, and Y146. The Selectivity filter signature appears at 143–148 (TIGYGL). Residues 147–155 (GLRCVTEEC) lie on the Extracellular side of the membrane. The chain crosses the membrane as a helical span at residues 156–183 (PVAVFMVVAQSIVGCIIDSFMIGAIMAK). Residues K183 and K188 each contribute to the a 1,2-diacyl-sn-glycero-3-phospho-(1D-myo-inositol-4,5-bisphosphate) site. The Cytoplasmic portion of the chain corresponds to 184-427 (MARPKKRAQT…QRPYRRESEI (244 aa)). Residues 387–396 (DEEDEVDGEQ) show a composition bias toward acidic residues. A disordered region spans residues 387 to 427 (DEEDEVDGEQDSLGPQARRDFDRPQAGTALEQRPYRRESEI). Positions 425-427 (SEI) match the PDZ-binding motif.

The protein belongs to the inward rectifier-type potassium channel (TC 1.A.2.1) family. KCNJ12 subfamily. As to quaternary structure, homotetramer. Forms heteromer with KCNJ4. Association, via its PDZ-recognition domain, with LIN7A, LIN7B, LIN7C, DLG1, CASK and APBA1 plays a key role in its localization and trafficking.

The protein resides in the membrane. It carries out the reaction K(+)(in) = K(+)(out). With respect to regulation, activated by phosphatidylinositol 4,5-biphosphate (PtdIns(4,5)P2). PtdIns(4,5)P2 binding to the cytoplasmic side of the channel triggers a conformation change leading to channel opening. Inward rectifying potassium channel that probably participates in controlling the resting membrane potential in electrically excitable cells. Probably participates in establishing action potential waveform and excitability of neuronal and muscle tissues. Inward rectifier potassium channels are characterized by a greater tendency to allow potassium to flow into the cell rather than out of it. Their voltage dependence is regulated by the concentration of extracellular potassium; as external potassium is raised, the voltage range of the channel opening shifts to more positive voltages. The inward rectification is mainly due to the blockage of outward current by internal magnesium. This chain is ATP-sensitive inward rectifier potassium channel 12 (KCNJ12), found in Bos taurus (Bovine).